Reading from the N-terminus, the 425-residue chain is Serine--tRNA ligase (425 aa).

231–233 (TAE) serves as a coordination point for L-serine. 262 to 264 (RSE) is an ATP binding site. Position 285 (E285) interacts with L-serine. Residue 349-352 (EISS) participates in ATP binding. S385 is an L-serine binding site.

This sequence belongs to the class-II aminoacyl-tRNA synthetase family. Type-1 seryl-tRNA synthetase subfamily. In terms of assembly, homodimer. The tRNA molecule binds across the dimer.

Its subcellular location is the cytoplasm. It carries out the reaction tRNA(Ser) + L-serine + ATP = L-seryl-tRNA(Ser) + AMP + diphosphate + H(+). It catalyses the reaction tRNA(Sec) + L-serine + ATP = L-seryl-tRNA(Sec) + AMP + diphosphate + H(+). It participates in aminoacyl-tRNA biosynthesis; selenocysteinyl-tRNA(Sec) biosynthesis; L-seryl-tRNA(Sec) from L-serine and tRNA(Sec): step 1/1. Catalyzes the attachment of serine to tRNA(Ser). Is also able to aminoacylate tRNA(Sec) with serine, to form the misacylated tRNA L-seryl-tRNA(Sec), which will be further converted into selenocysteinyl-tRNA(Sec). The protein is Serine--tRNA ligase of Bartonella henselae (strain ATCC 49882 / DSM 28221 / CCUG 30454 / Houston 1) (Rochalimaea henselae).